The following is a 355-amino-acid chain: Uroporphyrinogen decarboxylase (355 aa).

Residues 27–31 (RQAGR), Asp78, Tyr155, Thr210, and His328 each bind substrate.

This sequence belongs to the uroporphyrinogen decarboxylase family. In terms of assembly, homodimer.

It localises to the cytoplasm. The catalysed reaction is uroporphyrinogen III + 4 H(+) = coproporphyrinogen III + 4 CO2. The protein operates within porphyrin-containing compound metabolism; protoporphyrin-IX biosynthesis; coproporphyrinogen-III from 5-aminolevulinate: step 4/4. Catalyzes the decarboxylation of four acetate groups of uroporphyrinogen-III to yield coproporphyrinogen-III. The chain is Uroporphyrinogen decarboxylase from Pseudomonas fluorescens (strain SBW25).